Consider the following 72-residue polypeptide: Large ribosomal subunit protein uL29 (72 aa).

Belongs to the universal ribosomal protein uL29 family.

This chain is Large ribosomal subunit protein uL29 (rpmC), found in Chlamydia muridarum (strain MoPn / Nigg).